Consider the following 747-residue polypeptide: Catalase-peroxidase (747 aa).

A signal peptide spans 1-27; sequence MRKFSVSKVALLAATMAPALLPAAARA. Residues 116–238 constitute a cross-link (tryptophyl-tyrosyl-methioninium (Trp-Tyr) (with M-264)); the sequence is WHSAGTYRTA…LAAVQMGLIY (123 aa). The Proton acceptor role is filled by His117. Residues 238-264 constitute a cross-link (tryptophyl-tyrosyl-methioninium (Tyr-Met) (with W-116)); it reads YVNPEGPNGNPDPLLAAKDIRETFGRM. His279 is a heme b binding site.

The protein belongs to the peroxidase family. Peroxidase/catalase subfamily. Homodimer or homotetramer. Heme b is required as a cofactor. In terms of processing, formation of the three residue Trp-Tyr-Met cross-link is important for the catalase, but not the peroxidase activity of the enzyme.

It carries out the reaction H2O2 + AH2 = A + 2 H2O. The catalysed reaction is 2 H2O2 = O2 + 2 H2O. Bifunctional enzyme with both catalase and broad-spectrum peroxidase activity. In Novosphingobium aromaticivorans (strain ATCC 700278 / DSM 12444 / CCUG 56034 / CIP 105152 / NBRC 16084 / F199), this protein is Catalase-peroxidase.